The following is a 572-amino-acid chain: Phenylalanine--tRNA ligase beta subunit (572 aa).

One can recognise a B5 domain in the interval 285-363 (LSTTTKTVSH…RAFGFNELEP (79 aa)). Residues aspartate 341, aspartate 347, aspartate 350, and aspartate 351 each coordinate Mg(2+).

This sequence belongs to the phenylalanyl-tRNA synthetase beta subunit family. Type 2 subfamily. As to quaternary structure, tetramer of two alpha and two beta subunits. Requires Mg(2+) as cofactor.

It is found in the cytoplasm. The catalysed reaction is tRNA(Phe) + L-phenylalanine + ATP = L-phenylalanyl-tRNA(Phe) + AMP + diphosphate + H(+). The sequence is that of Phenylalanine--tRNA ligase beta subunit from Natronomonas pharaonis (strain ATCC 35678 / DSM 2160 / CIP 103997 / JCM 8858 / NBRC 14720 / NCIMB 2260 / Gabara) (Halobacterium pharaonis).